The primary structure comprises 240 residues: Dihydromonapterin reductase (240 aa).

The Proton acceptor role is filled by Tyr152.

The protein belongs to the short-chain dehydrogenases/reductases (SDR) family. FolM subfamily.

It catalyses the reaction (6S)-5,6,7,8-tetrahydrofolate + NADP(+) = 7,8-dihydrofolate + NADPH + H(+). The catalysed reaction is 7,8-dihydromonapterin + NADPH + H(+) = 5,6,7,8-tetrahydromonapterin + NADP(+). Functionally, catalyzes the reduction of dihydromonapterin to tetrahydromonapterin. Also has lower activity with dihydrofolate. The polypeptide is Dihydromonapterin reductase (folM) (Escherichia coli O6:H1 (strain CFT073 / ATCC 700928 / UPEC)).